Consider the following 336-residue polypeptide: Biotin synthase (336 aa).

The Radical SAM core domain occupies 54 to 281 (NAIQLSTLLS…KAMVRLSAGR (228 aa)). [4Fe-4S] cluster-binding residues include Cys69, Cys73, and Cys76. Positions 113, 144, 204, and 276 each coordinate [2Fe-2S] cluster.

Belongs to the radical SAM superfamily. Biotin synthase family. As to quaternary structure, homodimer. Requires [4Fe-4S] cluster as cofactor. [2Fe-2S] cluster serves as cofactor.

It catalyses the reaction (4R,5S)-dethiobiotin + (sulfur carrier)-SH + 2 reduced [2Fe-2S]-[ferredoxin] + 2 S-adenosyl-L-methionine = (sulfur carrier)-H + biotin + 2 5'-deoxyadenosine + 2 L-methionine + 2 oxidized [2Fe-2S]-[ferredoxin]. The protein operates within cofactor biosynthesis; biotin biosynthesis; biotin from 7,8-diaminononanoate: step 2/2. Its function is as follows. Catalyzes the conversion of dethiobiotin (DTB) to biotin by the insertion of a sulfur atom into dethiobiotin via a radical-based mechanism. The chain is Biotin synthase from Burkholderia thailandensis (strain ATCC 700388 / DSM 13276 / CCUG 48851 / CIP 106301 / E264).